The following is a 144-amino-acid chain: Large ribosomal subunit protein uL15 (144 aa).

The tract at residues 1 to 45 is disordered; that stretch reads MNLNTLSPDPGSRPSRRRVGRGIGSGLGKTCGKGHKGQKSRAGGY. Residues 21 to 31 show a composition bias toward gly residues; the sequence is RGIGSGLGKTC.

It belongs to the universal ribosomal protein uL15 family. As to quaternary structure, part of the 50S ribosomal subunit.

Binds to the 23S rRNA. The sequence is that of Large ribosomal subunit protein uL15 from Legionella pneumophila (strain Paris).